The sequence spans 312 residues: Malate dehydrogenase (312 aa).

Residues 7–13 and Asp-34 each bind NAD(+); that span reads GAAGGIG. Residues Arg-81 and Arg-87 each coordinate substrate. NAD(+) contacts are provided by residues Asn-94 and 117 to 119; that span reads ITN. Asn-119 and Arg-153 together coordinate substrate. The active-site Proton acceptor is His-177. Met-227 contacts NAD(+).

The protein belongs to the LDH/MDH superfamily. MDH type 1 family. In terms of assembly, homodimer.

It carries out the reaction (S)-malate + NAD(+) = oxaloacetate + NADH + H(+). In terms of biological role, catalyzes the reversible oxidation of malate to oxaloacetate. This is Malate dehydrogenase from Salmonella choleraesuis (strain SC-B67).